The chain runs to 341 residues: Glycerol-3-phosphate dehydrogenase [NAD(P)+] (341 aa).

Residues S14, F15, R35, and K108 each coordinate NADPH. Positions 108 and 136 each coordinate sn-glycerol 3-phosphate. A140 is a binding site for NADPH. The sn-glycerol 3-phosphate site is built by K191, D244, S254, R255, and N256. K191 serves as the catalytic Proton acceptor. R255 contacts NADPH. Residues V279 and E281 each contribute to the NADPH site.

It belongs to the NAD-dependent glycerol-3-phosphate dehydrogenase family.

Its subcellular location is the cytoplasm. The enzyme catalyses sn-glycerol 3-phosphate + NAD(+) = dihydroxyacetone phosphate + NADH + H(+). It catalyses the reaction sn-glycerol 3-phosphate + NADP(+) = dihydroxyacetone phosphate + NADPH + H(+). Its pathway is membrane lipid metabolism; glycerophospholipid metabolism. Functionally, catalyzes the reduction of the glycolytic intermediate dihydroxyacetone phosphate (DHAP) to sn-glycerol 3-phosphate (G3P), the key precursor for phospholipid synthesis. The polypeptide is Glycerol-3-phosphate dehydrogenase [NAD(P)+] (Pseudomonas putida (strain ATCC 700007 / DSM 6899 / JCM 31910 / BCRC 17059 / LMG 24140 / F1)).